The following is a 431-amino-acid chain: Phosphate regulon sensor protein PhoR (431 aa).

Residues 1–9 (MLERLSWKR) lie on the Cytoplasmic side of the membrane. A helical membrane pass occupies residues 10 to 28 (LVLELLLCCLPAFILGAFF). Residues 29–32 (GYLP) lie on the Periplasmic side of the membrane. Residues 33–51 (WFLLASVTGLLIWHFWNLL) form a helical membrane-spanning segment. At 52–431 (RLSWWLWVDR…PERLIAKNSD (380 aa)) the chain is on the cytoplasmic side. One can recognise a PAS domain in the interval 96–172 (LIKRFRSGAE…RPLNLVLNTG (77 aa)). The 216-residue stretch at 210-425 (NVSHELRTPL…RFSFVIPERL (216 aa)) folds into the Histidine kinase domain. Residue histidine 213 is modified to Phosphohistidine; by autocatalysis.

The protein resides in the cell inner membrane. The enzyme catalyses ATP + protein L-histidine = ADP + protein N-phospho-L-histidine.. Its function is as follows. Member of the two-component regulatory system PhoR/PhoB involved in the phosphate regulon genes expression. PhoR may function as a membrane-associated protein kinase that phosphorylates PhoB in response to environmental signals. In Escherichia coli (strain K12), this protein is Phosphate regulon sensor protein PhoR (phoR).